Here is a 379-residue protein sequence, read N- to C-terminus: Putative zinc metalloprotease BR1156/BS1330_I1152 (379 aa).

His33 lines the Zn(2+) pocket. Glu34 is an active-site residue. His37 contacts Zn(2+). 4 helical membrane-spanning segments follow: residues 39–61 (LVAR…ELLG), 122–144 (VFAG…FALY), 305–327 (FDWL…LFPL), and 355–377 (IFYR…NDLF). A PDZ domain is found at 133–208 (TIAIFSVFFA…LNFTVERDGK (76 aa)).

It belongs to the peptidase M50B family. Zn(2+) is required as a cofactor.

The protein localises to the cell inner membrane. This chain is Putative zinc metalloprotease BR1156/BS1330_I1152, found in Brucella suis biovar 1 (strain 1330).